The following is a 1044-amino-acid chain: MSNSNTTQETLEIMKESEKKLVEESVNKNKFISKTPSKEDVEKEGEENGLRQETQRRTSSHGHARKRAKSNSKLKLVRSLAVCEESSTPFVDGPLDTQDIIQLHISCPSDKEEEKSTKDVSEKEDKDKSKEKVPRKMLSRDSSQEYTDSTGIDLHEFLVNTLKKNPRDRMMLLKLEQEILDFINDNNNQFKKFPQMTSYHRMLLHRVAAYFGMDHNVDQTGKAVIINKTSSTRIPEQRFSEHIKDEKNTEFQQRFILKRDDASMDRDDNQMRVPLQDGRRSKSIEEREEEYQRVRERIFARETGQNGYLNDIRLSKEAFSSSSHKRRQIFRGNREGLSRTSSSRQSSTDSELKSLEPRPWSSTDSDGSVRSMRPPVTKASSFSGISILTRGDSIGSSKGGSAGRLSRPGMALGAPEVCNQVTSPQSVRGLLPCTAQQQQQQQQQQQQLPALPPTPQHQPPLNNHMISQPVPALQPSPQPVQFSPSSCPQVLLPVSPPQQYNMAEDLSNPFGQMSLSRQGSTEAADPSSALFQPPLISQHPQQASFIMASAGQPLPTSNYSTSSHAPPTQQVLPPQGYMQPPQQIQVSYYPPGQYPNSNQQYRPLSHPVAYSPQRGQQLPQASQQPGLQPMMSNQQQTAYQGMLGVQQPQNQGLLSNQRSSMGGQMQGLVVQYTPLPSYQVPVGSDSQNVVQPSFQQPMLVPASQSVQGGLPTGGVPVYYSMIPPAQQNGTSPSVGFLQPPGSEQYQMPQSPSPCSPPQMSQQYSGVSPSGPGVVVMQLNVPNGPQAPQNPSMVQWSHCKYYSVEQRGQKPGDLYSPDGSPQANAQMGSSPVTSPTQSPAPSPVTSLSNVCTGLSPLPVLTPFPRPGGPAQGDGRYSLLGQPLQYNLSICPPLLHGQSTYTVHQGQSGLKHGNRGKRQALKSASTDLGTADVVLGRVLEVTDLPEGITRTEADKLFTQLAMSGAKIQWLKDAQGLPGAGGGDNSGTAENGRHPDLAALYTIVAVFPSPLAAQNASLRLNNSVSRFKLRVAKKNYDLRILERASSQ.

Disordered stretches follow at residues 23 to 71 (EESV…AKSN) and 106 to 147 (SCPS…QEYT). Positions 36-56 (PSKEDVEKEGEENGLRQETQR) are enriched in basic and acidic residues. Ser37 is subject to Phosphoserine. The segment covering 58–71 (TSSHGHARKRAKSN) has biased composition (basic residues). The segment covering 109–143 (SDKEEEKSTKDVSEKEDKDKSKEKVPRKMLSRDSS) has biased composition (basic and acidic residues). At Ser143 the chain carries Phosphoserine. In terms of domain architecture, R3H spans 169–232 (RMMLLKLEQE…AVIINKTSST (64 aa)). Positions 233–303 (RIPEQRFSEH…VRERIFARET (71 aa)) constitute an SUZ domain. Basic and acidic residues-rich tracts occupy residues 261–270 (DASMDRDDNQ) and 277–288 (DGRRSKSIEERE). Disordered regions lie at residues 261 to 288 (DASMDRDDNQMRVPLQDGRRSKSIEERE), 320 to 408 (SSSS…LSRP), 433 to 485 (CTAQ…FSPS), 502 to 533 (MAEDLSNPFGQMSLSRQGSTEAADPSSALFQP), 551 to 600 (GQPL…SNQQ), 729 to 770 (GTSP…SPSG), and 807 to 848 (GQKP…SLSN). The span at 338 to 349 (SRTSSSRQSSTD) shows a compositional bias: low complexity. 3 positions are modified to phosphoserine: Ser362, Ser365, and Ser381. Positions 433–449 (CTAQQQQQQQQQQQQLP) are enriched in low complexity. Composition is skewed to polar residues over residues 509 to 521 (PFGQMSLSRQGST) and 554 to 572 (LPTSNYSTSSHAPPTQQVL). Over residues 757 to 770 (PQMSQQYSGVSPSG) the composition is skewed to low complexity. Positions 818-848 (GSPQANAQMGSSPVTSPTQSPAPSPVTSLSN) are enriched in polar residues. Phosphoserine occurs at positions 921 and 923. Phosphothreonine occurs at positions 924 and 928.

Its subcellular location is the nucleus. This is R3H domain-containing protein 2 (R3hdm2) from Mus musculus (Mouse).